The primary structure comprises 260 residues: Crotonyl-CoA hydratase (260 aa).

E114 acts as the Nucleophile in catalysis. The active-site Proton acceptor is the E134.

Belongs to the enoyl-CoA hydratase/isomerase family. In terms of assembly, homotetramer.

Its subcellular location is the cytoplasm. It carries out the reaction 3-hydroxybutanoyl-CoA = (2E)-butenoyl-CoA + H2O. The enzyme catalyses a short-chain (3S)-3-hydroxyacyl-CoA = a short-chain (2E)-enoyl-CoA + H2O. Its pathway is lipid metabolism; butanoate metabolism. Its function is as follows. Involved in syntrophic growth of S.wolfei with butyrate, as part of the butyrate oxidation pathway. Probably catalyzes the hydration of crotonyl-CoA to 3-hydroxybutyryl-CoA. The sequence is that of Crotonyl-CoA hydratase from Syntrophomonas wolfei subsp. wolfei (strain DSM 2245B / Goettingen).